We begin with the raw amino-acid sequence, 322 residues long: Lipoyl synthase (322 aa).

Polar residues predominate over residues 1-14; it reads MKTLDENQAPSRQT. A disordered region spans residues 1–30; it reads MKTLDENQAPSRQTPESHRRGAEKLSRIPV. The span at 15–26 shows a compositional bias: basic and acidic residues; sequence PESHRRGAEKLS. [4Fe-4S] cluster contacts are provided by Cys-70, Cys-75, Cys-81, Cys-96, Cys-100, Cys-103, and Ser-310. The 218-residue stretch at 82–299 folds into the Radical SAM core domain; sequence FGHGTATFMI…AGYARELGFA (218 aa).

The protein belongs to the radical SAM superfamily. Lipoyl synthase family. [4Fe-4S] cluster is required as a cofactor.

Its subcellular location is the cytoplasm. It catalyses the reaction [[Fe-S] cluster scaffold protein carrying a second [4Fe-4S](2+) cluster] + N(6)-octanoyl-L-lysyl-[protein] + 2 oxidized [2Fe-2S]-[ferredoxin] + 2 S-adenosyl-L-methionine + 4 H(+) = [[Fe-S] cluster scaffold protein] + N(6)-[(R)-dihydrolipoyl]-L-lysyl-[protein] + 4 Fe(3+) + 2 hydrogen sulfide + 2 5'-deoxyadenosine + 2 L-methionine + 2 reduced [2Fe-2S]-[ferredoxin]. It functions in the pathway protein modification; protein lipoylation via endogenous pathway; protein N(6)-(lipoyl)lysine from octanoyl-[acyl-carrier-protein]: step 2/2. Its function is as follows. Catalyzes the radical-mediated insertion of two sulfur atoms into the C-6 and C-8 positions of the octanoyl moiety bound to the lipoyl domains of lipoate-dependent enzymes, thereby converting the octanoylated domains into lipoylated derivatives. The chain is Lipoyl synthase from Methylococcus capsulatus (strain ATCC 33009 / NCIMB 11132 / Bath).